Here is a 343-residue protein sequence, read N- to C-terminus: Arginine-hydroxylase NDUFAF5, mitochondrial (343 aa).

The transit peptide at 1-29 directs the protein to the mitochondrion; sequence MLRRVVLSRLYARLGGPAVSAGRGGRRGV. The interval 18-40 is disordered; the sequence is AVSAGRGGRRGVASSVPPSGSTS.

It belongs to the methyltransferase superfamily. As to quaternary structure, interacts with NDUFAF8, leading to stabilize NDUFAF5. Interacts with NDUFS7. Interacts with PYURF (via TRM112 domain); the interaction is direct and stabilizes NDUFAF5 protein.

The protein localises to the mitochondrion inner membrane. Its function is as follows. Arginine hydroxylase that mediates hydroxylation of 'Arg-111' of NDUFS7 and is involved in the assembly of mitochondrial NADH:ubiquinone oxidoreductase complex (complex I, MT-ND1) at early stages. May also have methyltransferase activity. In Rattus norvegicus (Rat), this protein is Arginine-hydroxylase NDUFAF5, mitochondrial.